The following is a 71-amino-acid chain: Protein translocase subunit SecE (71 aa).

Residues 43 to 63 (VAGAGILAVGAVGFIIYVLLT) form a helical membrane-spanning segment.

This sequence belongs to the SecE/SEC61-gamma family. In terms of assembly, component of the Sec protein translocase complex. Heterotrimer consisting of SecY (alpha), SecG (beta) and SecE (gamma) subunits. The heterotrimers can form oligomers, although 1 heterotrimer is thought to be able to translocate proteins. Interacts with the ribosome. May interact with SecDF, and other proteins may be involved.

The protein localises to the cell membrane. In terms of biological role, essential subunit of the Sec protein translocation channel SecYEG. Clamps together the 2 halves of SecY. May contact the channel plug during translocation. This Methanosarcina mazei (strain ATCC BAA-159 / DSM 3647 / Goe1 / Go1 / JCM 11833 / OCM 88) (Methanosarcina frisia) protein is Protein translocase subunit SecE.